Here is a 576-residue protein sequence, read N- to C-terminus: Sulfite reductase [NADPH] hemoprotein beta-component (576 aa).

[4Fe-4S] cluster contacts are provided by cysteine 439, cysteine 445, cysteine 485, and cysteine 489. Residue cysteine 489 participates in siroheme binding.

The protein belongs to the nitrite and sulfite reductase 4Fe-4S domain family. As to quaternary structure, alpha(8)-beta(8). The alpha component is a flavoprotein, the beta component is a hemoprotein. Siroheme serves as cofactor. It depends on [4Fe-4S] cluster as a cofactor.

It carries out the reaction hydrogen sulfide + 3 NADP(+) + 3 H2O = sulfite + 3 NADPH + 4 H(+). The protein operates within sulfur metabolism; hydrogen sulfide biosynthesis; hydrogen sulfide from sulfite (NADPH route): step 1/1. In terms of biological role, component of the sulfite reductase complex that catalyzes the 6-electron reduction of sulfite to sulfide. This is one of several activities required for the biosynthesis of L-cysteine from sulfate. The polypeptide is Sulfite reductase [NADPH] hemoprotein beta-component (Aliivibrio salmonicida (strain LFI1238) (Vibrio salmonicida (strain LFI1238))).